The sequence spans 159 residues: 2-C-methyl-D-erythritol 2,4-cyclodiphosphate synthase (159 aa).

A divalent metal cation-binding residues include aspartate 8 and histidine 10. 4-CDP-2-C-methyl-D-erythritol 2-phosphate contacts are provided by residues 8–10 (DVH) and 34–35 (HS). Position 42 (histidine 42) interacts with a divalent metal cation. 4-CDP-2-C-methyl-D-erythritol 2-phosphate-binding positions include 56-58 (DIG), 61-65 (FPDTD), 100-106 (AQAPKML), 132-135 (TTTE), phenylalanine 139, and arginine 142.

The protein belongs to the IspF family. Homotrimer. A divalent metal cation serves as cofactor.

It catalyses the reaction 4-CDP-2-C-methyl-D-erythritol 2-phosphate = 2-C-methyl-D-erythritol 2,4-cyclic diphosphate + CMP. Its pathway is isoprenoid biosynthesis; isopentenyl diphosphate biosynthesis via DXP pathway; isopentenyl diphosphate from 1-deoxy-D-xylulose 5-phosphate: step 4/6. In terms of biological role, involved in the biosynthesis of isopentenyl diphosphate (IPP) and dimethylallyl diphosphate (DMAPP), two major building blocks of isoprenoid compounds. Catalyzes the conversion of 4-diphosphocytidyl-2-C-methyl-D-erythritol 2-phosphate (CDP-ME2P) to 2-C-methyl-D-erythritol 2,4-cyclodiphosphate (ME-CPP) with a corresponding release of cytidine 5-monophosphate (CMP). The polypeptide is 2-C-methyl-D-erythritol 2,4-cyclodiphosphate synthase (Escherichia coli O81 (strain ED1a)).